The primary structure comprises 144 residues: Cytochrome c oxidase subunit 4 isoform 1, mitochondrial (144 aa).

Residues 1–73 lie on the Mitochondrial matrix side of the membrane; the sequence is SVVKSEDYTL…SFAEMNRGSN (73 aa). An N6-acetyllysine; alternate modification is found at Lys-4. Residue Lys-4 is modified to N6-succinyllysine; alternate. Phosphoserine occurs at positions 31 and 33. Lys-35 is modified (N6-acetyllysine; alternate). Lys-35 carries the post-translational modification N6-succinyllysine; alternate. Residue Lys-42 is modified to N6-acetyllysine. A helical membrane pass occupies residues 74 to 99; the sequence is EWKTVVGAAMFFIGFTAILIMLEKRY. Over 100–144 the chain is Mitochondrial intermembrane; sequence VYGPLPHTFDKEWVAMQTKRMLDLKVNPVDGLASKWDYEKKEWKK.

Belongs to the cytochrome c oxidase IV family. As to quaternary structure, component of the cytochrome c oxidase (complex IV, CIV), a multisubunit enzyme composed of 14 subunits. The complex is composed of a catalytic core of 3 subunits MT-CO1, MT-CO2 and MT-CO3, encoded in the mitochondrial DNA, and 11 supernumerary subunits COX4I, COX5A, COX5B, COX6A, COX6B, COX6C, COX7A, COX7B, COX7C, COX8 and NDUFA4, which are encoded in the nuclear genome. The complex exists as a monomer or a dimer and forms supercomplexes (SCs) in the inner mitochondrial membrane with NADH-ubiquinone oxidoreductase (complex I, CI) and ubiquinol-cytochrome c oxidoreductase (cytochrome b-c1 complex, complex III, CIII), resulting in different assemblies (supercomplex SCI(1)III(2)IV(1) and megacomplex MCI(2)III(2)IV(2)). Interacts with PHB2; the interaction decreases in absence of SPHK2. Interacts with AFG1L. Interacts with ABCB7; this interaction allows the regulation of cellular iron homeostasis and cellular reactive oxygen species (ROS) levels in cardiomyocytes. Interacts with FLVCR2; this interaction occurs in the absence of heme and is disrupted upon heme binding. Interacts with IRGC.

It is found in the mitochondrion inner membrane. It functions in the pathway energy metabolism; oxidative phosphorylation. Its function is as follows. Component of the cytochrome c oxidase, the last enzyme in the mitochondrial electron transport chain which drives oxidative phosphorylation. The respiratory chain contains 3 multisubunit complexes succinate dehydrogenase (complex II, CII), ubiquinol-cytochrome c oxidoreductase (cytochrome b-c1 complex, complex III, CIII) and cytochrome c oxidase (complex IV, CIV), that cooperate to transfer electrons derived from NADH and succinate to molecular oxygen, creating an electrochemical gradient over the inner membrane that drives transmembrane transport and the ATP synthase. Cytochrome c oxidase is the component of the respiratory chain that catalyzes the reduction of oxygen to water. Electrons originating from reduced cytochrome c in the intermembrane space (IMS) are transferred via the dinuclear copper A center (CU(A)) of subunit 2 and heme A of subunit 1 to the active site in subunit 1, a binuclear center (BNC) formed by heme A3 and copper B (CU(B)). The BNC reduces molecular oxygen to 2 water molecules using 4 electrons from cytochrome c in the IMS and 4 protons from the mitochondrial matrix. This chain is Cytochrome c oxidase subunit 4 isoform 1, mitochondrial (COX4I1), found in Pithecia pithecia (White-faced saki).